The following is a 453-amino-acid chain: Chromosomal replication initiator protein DnaA (453 aa).

Residues 1–74 (MKEKQFWNRI…GFEIYDAEIT (74 aa)) are domain I, interacts with DnaA modulators. The segment at 74–113 (TPHYIFTKPQDTTSSQVEEATNLTLYDYSPKLVSIPYSDT) is domain II. A domain III, AAA+ region region spans residues 114–331 (GLKEKYTFDN…GAINDITLIA (218 aa)). Positions 158, 160, 161, and 162 each coordinate ATP. The interval 332–453 (RVKKIKDITI…EIESIKKKIK (122 aa)) is domain IV, binds dsDNA.

Belongs to the DnaA family. As to quaternary structure, oligomerizes as a right-handed, spiral filament on DNA at oriC.

The protein localises to the cytoplasm. Plays an essential role in the initiation and regulation of chromosomal replication. ATP-DnaA binds to the origin of replication (oriC) to initiate formation of the DNA replication initiation complex once per cell cycle. Binds the DnaA box (a 9 base pair repeat at the origin) and separates the double-stranded (ds)DNA. Forms a right-handed helical filament on oriC DNA; dsDNA binds to the exterior of the filament while single-stranded (ss)DNA is stabiized in the filament's interior. The ATP-DnaA-oriC complex binds and stabilizes one strand of the AT-rich DNA unwinding element (DUE), permitting loading of DNA polymerase. After initiation quickly degrades to an ADP-DnaA complex that is not apt for DNA replication. Binds acidic phospholipids. The polypeptide is Chromosomal replication initiator protein DnaA (Streptococcus pneumoniae (strain P1031)).